A 203-amino-acid polypeptide reads, in one-letter code: Outer-membrane lipoprotein LolB (203 aa).

A signal peptide spans Met1–Gly21. Cys22 carries the N-palmitoyl cysteine lipid modification. Cys22 carries the S-diacylglycerol cysteine lipid modification.

This sequence belongs to the LolB family. In terms of assembly, monomer.

It is found in the cell outer membrane. In terms of biological role, plays a critical role in the incorporation of lipoproteins in the outer membrane after they are released by the LolA protein. The polypeptide is Outer-membrane lipoprotein LolB (Shewanella frigidimarina (strain NCIMB 400)).